Reading from the N-terminus, the 763-residue chain is Phosphoglycerol transferase I (763 aa).

Transmembrane regions (helical) follow at residues 1-21 (MSELLSFALFLASVLIYAWKA), 26-46 (WWFAATLTVLGLFVVLNITLF), 77-97 (ILPGIGIVLGLTAVFGALGWI), and 108-128 (FGYSLLALLLALGSVDASPAF).

Belongs to the OpgB family.

It is found in the cell inner membrane. The enzyme catalyses a phosphatidylglycerol + a membrane-derived-oligosaccharide D-glucose = a 1,2-diacyl-sn-glycerol + a membrane-derived-oligosaccharide 6-(glycerophospho)-D-glucose.. It participates in glycan metabolism; osmoregulated periplasmic glucan (OPG) biosynthesis. In terms of biological role, transfers a phosphoglycerol residue from phosphatidylglycerol to the membrane-bound nascent glucan backbones. The chain is Phosphoglycerol transferase I from Escherichia coli O45:K1 (strain S88 / ExPEC).